The primary structure comprises 95 residues: uncharacterized protein (95 aa).

The helical transmembrane segment at 3-23 (FVIIIAILLLGISLILAFTVL) threads the bilayer.

The protein localises to the membrane. This is an uncharacterized protein from Methanocaldococcus jannaschii (strain ATCC 43067 / DSM 2661 / JAL-1 / JCM 10045 / NBRC 100440) (Methanococcus jannaschii).